Consider the following 1161-residue polypeptide: PAN2-PAN3 deadenylation complex catalytic subunit pan2 (1161 aa).

3 WD repeats span residues 20-59 (GLPTIATTIAFDDVSELLWAGNEFGRITSFYGPELQRYTS), 102-145 (AHEE…DKLQ), and 276-315 (ANVSFMLGIDISPSGEALAINDAECAIHLWGSPSKVHFNE). The linker stretch occupies residues 316–452 (MSKEVEFADV…GAKLNGEAED (137 aa)). Positions 453-822 (DPLLKYSNVE…IPCVLAYQAR (370 aa)) constitute a USP domain. The 179-residue stretch at 871–1049 (VALDTEFVDL…VEDARMALRL (179 aa)) folds into the Exonuclease domain. A divalent metal cation-binding residues include D874, E876, D983, and D1042. The disordered stretch occupies residues 1094 to 1161 (GTAVTMQNNS…GDFFGGSPLK (68 aa)). A compositionally biased stretch (polar residues) spans 1097-1110 (VTMQNNSGRNTPST). The span at 1116–1129 (AAAAAATTSAPATP) shows a compositional bias: low complexity. A compositionally biased stretch (gly residues) spans 1145 to 1155 (TFGGPGTGDFF).

The protein belongs to the peptidase C19 family. PAN2 subfamily. Forms a heterotrimer with an asymmetric homodimer of the regulatory subunit pan3 to form the poly(A)-nuclease (PAN) deadenylation complex. A divalent metal cation is required as a cofactor.

The protein resides in the cytoplasm. The catalysed reaction is Exonucleolytic cleavage of poly(A) to 5'-AMP.. Its activity is regulated as follows. Positively regulated by the regulatory subunit pan3. Its function is as follows. Catalytic subunit of the poly(A)-nuclease (PAN) deadenylation complex, one of two cytoplasmic mRNA deadenylases involved in mRNA turnover. PAN specifically shortens poly(A) tails of RNA and the activity is stimulated by poly(A)-binding protein pab1. PAN deadenylation is followed by rapid degradation of the shortened mRNA tails by the CCR4-NOT complex. Deadenylated mRNAs are then degraded by two alternative mechanisms, namely exosome-mediated 3'-5' exonucleolytic degradation, or deadenylation-dependent mRNA decaping and subsequent 5'-3' exonucleolytic degradation by xrn1. May also be involved in post-transcriptional maturation of mRNA poly(A) tails. The sequence is that of PAN2-PAN3 deadenylation complex catalytic subunit pan2 from Aspergillus clavatus (strain ATCC 1007 / CBS 513.65 / DSM 816 / NCTC 3887 / NRRL 1 / QM 1276 / 107).